The sequence spans 213 residues: Protein HSH49 (213 aa).

RRM domains follow at residues 9 to 88 and 108 to 185; these read NTVY…QVTN and AKLF…YAFK.

As to quaternary structure, interacts with RDS3.

The protein resides in the nucleus. Possible SF3b-like factor. The chain is Protein HSH49 (HSH49) from Saccharomyces cerevisiae (strain ATCC 204508 / S288c) (Baker's yeast).